The chain runs to 755 residues: Histone-lysine N-methyltransferase, H3 lysine-9 specific SUVH8 (755 aa).

2 disordered regions span residues 62-98 (YDRD…PPQT) and 111-243 (YDRD…KMVI). Basic and acidic residues-rich tracts occupy residues 73-86 (VHRE…EEAH) and 122-135 (IDRE…EDAH). A DNA-binding region (a.T hook) is located at residues 174–186 (KRGRGRPKGSKNG). Over residues 174–193 (KRGRGRPKGSKNGSRKPKKP) the composition is skewed to basic residues. The span at 197–207 (DNNSTDASAGP) shows a compositional bias: polar residues. Basic residues predominate over residues 212 to 231 (GKRRCGRPKGLKNRSRKPKK). The region spanning 310 to 448 (GPIPGVQVGD…FKEYRFKLLR (139 aa)) is the YDG domain. The Pre-SET domain maps to 528–578 (QSLVQSYIHQNCTCILKNCGQLPYHDNILVCRKPLIYECGGSCPTRMVETG). The SET domain occupies 581 to 723 (LHLEVFKTSN…PMTELTYDYG (143 aa)). S-adenosyl-L-methionine is bound by residues 591–593 (CGW), aspartate 624, tyrosine 626, arginine 676, and 679–680 (NH). Residues cysteine 682, cysteine 743, cysteine 745, and cysteine 750 each contribute to the Zn(2+) site. A Post-SET domain is found at 739–755 (GKKICLCGSVKCRGSFG).

This sequence belongs to the class V-like SAM-binding methyltransferase superfamily. Histone-lysine methyltransferase family. Suvar3-9 subfamily.

It localises to the nucleus. The protein localises to the chromosome. Its subcellular location is the centromere. The enzyme catalyses N(6)-methyl-L-lysyl(9)-[histone H3] + S-adenosyl-L-methionine = N(6),N(6)-dimethyl-L-lysyl(9)-[histone H3] + S-adenosyl-L-homocysteine + H(+). The catalysed reaction is L-lysyl(9)-[histone H3] + S-adenosyl-L-methionine = N(6)-methyl-L-lysyl(9)-[histone H3] + S-adenosyl-L-homocysteine + H(+). Histone methyltransferase. Methylates 'Lys-9' of histone H3. H3 'Lys-9' methylation represents a specific tag for epigenetic transcriptional repression. The sequence is that of Histone-lysine N-methyltransferase, H3 lysine-9 specific SUVH8 (SUVH8) from Arabidopsis thaliana (Mouse-ear cress).